Reading from the N-terminus, the 297-residue chain is N-acetylmannosamine kinase (297 aa).

Residues 5–12 (ALDIGGTK) and 132–139 (GVGGGIIL) contribute to the ATP site. Zn(2+)-binding residues include histidine 156, cysteine 166, cysteine 168, and cysteine 173.

It belongs to the ROK (NagC/XylR) family. NanK subfamily. Homodimer.

The catalysed reaction is an N-acyl-D-mannosamine + ATP = an N-acyl-D-mannosamine 6-phosphate + ADP + H(+). The protein operates within amino-sugar metabolism; N-acetylneuraminate degradation; D-fructose 6-phosphate from N-acetylneuraminate: step 2/5. Catalyzes the phosphorylation of N-acetylmannosamine (ManNAc) to ManNAc-6-P. In Pasteurella multocida (strain Pm70), this protein is N-acetylmannosamine kinase.